Here is a 276-residue protein sequence, read N- to C-terminus: Putative non-heme chloroperoxidase (276 aa).

The 238-residue stretch at 26 to 263 folds into the AB hydrolase-1 domain; sequence PIVLIHGFPL…GGPHAINWTH (238 aa). Active-site residues include Ser-99, Asp-228, and His-257.

Belongs to the AB hydrolase superfamily. Bacterial non-heme haloperoxidase / perhydrolase family.

This is Putative non-heme chloroperoxidase from Synechocystis sp. (strain ATCC 27184 / PCC 6803 / Kazusa).